The following is a 472-amino-acid chain: ATP-dependent protease ATPase subunit HslU (472 aa).

Residues Ile-20, 62 to 67 (GVGKTE), Asp-285, Glu-350, and Arg-422 each bind ATP.

This sequence belongs to the ClpX chaperone family. HslU subfamily. As to quaternary structure, a double ring-shaped homohexamer of HslV is capped on each side by a ring-shaped HslU homohexamer. The assembly of the HslU/HslV complex is dependent on binding of ATP.

Its subcellular location is the cytoplasm. Its function is as follows. ATPase subunit of a proteasome-like degradation complex; this subunit has chaperone activity. The binding of ATP and its subsequent hydrolysis by HslU are essential for unfolding of protein substrates subsequently hydrolyzed by HslV. HslU recognizes the N-terminal part of its protein substrates and unfolds these before they are guided to HslV for hydrolysis. The chain is ATP-dependent protease ATPase subunit HslU from Lactiplantibacillus plantarum (strain ATCC BAA-793 / NCIMB 8826 / WCFS1) (Lactobacillus plantarum).